An 833-amino-acid polypeptide reads, in one-letter code: Mannosyl-oligosaccharide glucosidase (833 aa).

The Cytoplasmic segment spans residues 1–10 (MLISKSKMFK). Residues 11–28 (TFWILTSIVLLASATVDI) form a helical; Signal-anchor for type II membrane protein membrane-spanning segment. At 29–833 (SKLQEFEEYQ…ALVVNILGRF (805 aa)) the chain is on the lumenal side. Residues N42 and N122 each contribute to the substrate site. N42, N122, and N135 each carry an N-linked (GlcNAc...) asparagine glycan. E143 lines the substrate pocket. Catalysis depends on D601, which acts as the Proton donor. Residues C669 and C685 are joined by a disulfide bond. N787 carries N-linked (GlcNAc...) asparagine glycosylation. Residue E804 is the Proton acceptor of the active site.

This sequence belongs to the glycosyl hydrolase 63 family. Post-translationally, N-glycosylated.

It is found in the endoplasmic reticulum membrane. It carries out the reaction N(4)-(alpha-D-Glc-(1-&gt;2)-alpha-D-Glc-(1-&gt;3)-alpha-D-Glc-(1-&gt;3)-alpha-D-Man-(1-&gt;2)-alpha-D-Man-(1-&gt;2)-alpha-D-Man-(1-&gt;3)-[alpha-D-Man-(1-&gt;2)-alpha-D-Man-(1-&gt;3)-[alpha-D-Man-(1-&gt;2)-alpha-D-Man-(1-&gt;6)]-alpha-D-Man-(1-&gt;6)]-beta-D-Man-(1-&gt;4)-beta-D-GlcNAc-(1-&gt;4)-beta-D-GlcNAc)-L-asparaginyl-[protein] + H2O = N(4)-(alpha-D-Glc-(1-&gt;3)-alpha-D-Glc-(1-&gt;3)-alpha-D-Man-(1-&gt;2)-alpha-D-Man-(1-&gt;2)-alpha-D-Man-(1-&gt;3)-[alpha-D-Man-(1-&gt;2)-alpha-D-Man-(1-&gt;3)-[alpha-D-Man-(1-&gt;2)-alpha-D-Man-(1-&gt;6)]-alpha-D-Man-(1-&gt;6)]-beta-D-Man-(1-&gt;4)-beta-D-GlcNAc-(1-&gt;4)-beta-D-GlcNAc)-L-asparaginyl-[protein] + beta-D-glucose. It functions in the pathway glycan metabolism; N-glycan degradation. With respect to regulation, miglitol is an effective inhibitor at 1 mM. Functionally, cleaves the distal alpha 1,2-linked glucose residue from the Glc(3)Man(9)GlcNAc(2) oligosaccharide precursor highly specifically. Seems to play a role in beta-1,6-glucan synthesis. The sequence is that of Mannosyl-oligosaccharide glucosidase (CWH41) from Saccharomyces cerevisiae (strain ATCC 204508 / S288c) (Baker's yeast).